Here is a 720-residue protein sequence, read N- to C-terminus: MADVNLPPSDSVDNRLPEKSTSSSPPPPPPSSSLPQQEQEQDQQQLPLRRERDSRERRDERDIERPPPNRRERDRSPLPPPRRDYKRRPSLSPPPPYRDRRHSPPQRRSPPQKRYRRDDNGYDGRRGSPRGGYGPPDRRFGYDHGGGYDREMGGRPGYGDERPHGRFMGRYQDWEGGRGGYGDASNSGNPQRDGLMSYKQFIQELEDDILPSEAERRYQEYKSEYITTQKRAFFNTHKEEDWLKNKYHPTNLLSVIERRNDLAQKVAKDFLLDLQSGTLDLGPAVTALNKSGRTSEPNSEDEAAGVGKRKRHGMGGAKENELLSAAPKAPSFTSDPKRILTDVEQTQALVRKLDSEKKIEENVLQGSETEKSGREKLHSGSTGPVVIIRGLTSVKGLEGVELLDTLVTYLWRVHGLDYYGKVETNEAKGLRHVRAEGKVSDAKGDENESKFDSHWQERLKGQDPLEVMAAKEKIDAAATEALDPHVRKIRDEKYGWKYGCGAKGCTKLFHAAEFVYKHLKLKHTELVTELTTKVREELYFQNYMNDPNAPGGQPATQQSGPRDRPIRRKPSMENRLRDDRGGRRERDGRANGNDRNDRSEDQQRGDNDGGNPGEVGYDAFGGQGGVHVPPFLSDINPPPMLMPVPGAGPLGPFVPAPPEVAMQMFRDPSGPNPPFEGSGRGGPAPFLLSPAFRQDPRRLRSYQDLDAPEEEVTVIDYRSL.

3 disordered regions span residues 1–192, 288–335, and 361–380; these read MADV…NPQR, LNKS…FTSD, and ENVLQGSETEKSGREKLHSG. Over residues 33-47 the composition is skewed to low complexity; it reads SLPQQEQEQDQQQLP. Basic and acidic residues predominate over residues 48-76; the sequence is LRRERDSRERRDERDIERPPPNRRERDRS. A phosphoserine mark is found at Ser76, Ser90, and Ser92. Basic residues predominate over residues 99–115; that stretch reads DRRHSPPQRRSPPQKRY. Basic and acidic residues-rich tracts occupy residues 116–126 and 136–164; these read RRDDNGYDGRR and PDRRFGYDHGGGYDREMGGRPGYGDERPH. A compositionally biased stretch (polar residues) spans 288-297; it reads LNKSGRTSEP. Positions 368 to 378 are enriched in basic and acidic residues; it reads ETEKSGREKLH. The C2H2-type zinc-finger motif lies at 498-523; sequence YGCGAKGCTKLFHAAEFVYKHLKLKH. Disordered regions lie at residues 543–622 and 666–687; these read YMND…AFGG and RDPSGPNPPFEGSGRGGPAPFL. Positions 570–607 are enriched in basic and acidic residues; the sequence is PSMENRLRDDRGGRRERDGRANGNDRNDRSEDQQRGDN. Over residues 608–622 the composition is skewed to gly residues; the sequence is DGGNPGEVGYDAFGG. Ser689 bears the Phosphoserine mark.

Belongs to the ARS2 family. Interacts with HYL1. Interacts with RCF3, RS40 and RS41. In terms of tissue distribution, expressed in shoot meristems and in emerging organ primordia throughout development.

It localises to the nucleus. The protein localises to the nucleus speckle. In terms of biological role, acts as a mediator between the cap-binding complex (CBC) and both the pre-mRNA splicing and primary microRNAs (miRNAs) processing machinery. Required for proper processing of primary miRNAs to miRNAs, thereby playing a role in RNA-mediated gene silencing (RNAi) by miRNAs. Does not participate in sense post-transcriptional gene silencing. Acts as a regulator of meristem activity and adaxial leaf fate via the miRNA gene-silencing pathway by regulating the expression of PHB and by limiting the competence of shoot tissue to respond to KNOX expression. Its function is however not limited to miRNA-mediated repression of leaf polarity genes, but rather acts as a general regulator of primary microRNAs processing. Also critical for the accumulation of the trans-acting small interfering RNA (ta-siRNA). Required for pre-mRNA splicing. The polypeptide is Serrate RNA effector molecule (SE) (Arabidopsis thaliana (Mouse-ear cress)).